Here is a 152-residue protein sequence, read N- to C-terminus: Nucleoside diphosphate kinase B (152 aa).

Positions 1 to 66 (MANLERTFIA…DRPFFPGLVK (66 aa)) are interaction with AKAP13. Residues Lys-12, Phe-60, Arg-88, Thr-94, Arg-105, and Asn-115 each contribute to the ATP site. His-118 functions as the Pros-phosphohistidine intermediate in the catalytic mechanism.

The protein belongs to the NDK family. As to quaternary structure, hexamer of two different chains: An and B (A6, A5B, A4B2, A3B3, A2B4, AB5, B6). Interacts with CAPN8. Interacts with AKAP13. Interacts with ITGB1BP1 (via C-terminal domain region). Interacts with BCL2L10. It depends on Mg(2+) as a cofactor.

Its subcellular location is the cytoplasm. The protein resides in the cell projection. It localises to the lamellipodium. The protein localises to the ruffle. It is found in the nucleus. It catalyses the reaction a 2'-deoxyribonucleoside 5'-diphosphate + ATP = a 2'-deoxyribonucleoside 5'-triphosphate + ADP. The enzyme catalyses a ribonucleoside 5'-diphosphate + ATP = a ribonucleoside 5'-triphosphate + ADP. The catalysed reaction is ATP + protein L-histidine = ADP + protein N-phospho-L-histidine.. Functionally, major role in the synthesis of nucleoside triphosphates other than ATP. The ATP gamma phosphate is transferred to the NDP beta phosphate via a ping-pong mechanism, using a phosphorylated active-site intermediate. Negatively regulates Rho activity by interacting with AKAP13/LBC. Acts as a transcriptional activator of the MYC gene; binds DNA non-specifically. Binds to both single-stranded guanine- and cytosine-rich strands within the nuclease hypersensitive element (NHE) III(1) region of the MYC gene promoter. Does not bind to duplex NHE III(1). Has G-quadruplex (G4) DNA-binding activity, which is independent of its nucleotide-binding and kinase activity. Binds both folded and unfolded G4 with similar low nanomolar affinities. Stabilizes folded G4s regardless of whether they are prefolded or not. Exhibits histidine protein kinase activity. The chain is Nucleoside diphosphate kinase B (NME2) from Pongo abelii (Sumatran orangutan).